The following is a 254-amino-acid chain: MNPATIITNFNNSQLQTPPTSPVSFDKYYTYYNIQLEQSTLMPQPSKIKNGDPFTWSDIQFIIKSNQLEIFARSRQQTIKYHKFKQWLKDNKLSINDYLLDYELHWKESELREQQHELVSDKEYSIDYPEDLIFHNPNDISILYNKFPYYFEPNVKHICIWSKLKIPVDKNSEVGDISVMTKKLINRYLEKTFVAKGISWDQIVWFKNWLSLQSVRSISHIHVILKDVDDKFVDELISGGSGEVLTLDDYRNLE.

It is found in the cytoplasm. In terms of biological role, N-acetylglucosamine-induced protein which plays a role in the N-acetylglucosamine metabolic pathway. This chain is N-acetylglucosamine-induced protein 1, found in Candida albicans (strain SC5314 / ATCC MYA-2876) (Yeast).